Here is a 188-residue protein sequence, read N- to C-terminus: Elongation factor P (188 aa).

Lys34 is subject to N6-(3,6-diaminohexanoyl)-5-hydroxylysine.

The protein belongs to the elongation factor P family. In terms of processing, may be beta-lysylated on the epsilon-amino group of Lys-34 by the combined action of EpmA and EpmB, and then hydroxylated on the C5 position of the same residue by EpmC (if this protein is present). Lysylation is critical for the stimulatory effect of EF-P on peptide-bond formation. The lysylation moiety may extend toward the peptidyltransferase center and stabilize the terminal 3-CCA end of the tRNA. Hydroxylation of the C5 position on Lys-34 may allow additional potential stabilizing hydrogen-bond interactions with the P-tRNA.

It localises to the cytoplasm. It functions in the pathway protein biosynthesis; polypeptide chain elongation. In terms of biological role, involved in peptide bond synthesis. Alleviates ribosome stalling that occurs when 3 or more consecutive Pro residues or the sequence PPG is present in a protein, possibly by augmenting the peptidyl transferase activity of the ribosome. Modification of Lys-34 is required for alleviation. The protein is Elongation factor P of Xylella fastidiosa (strain M23).